Here is a 544-residue protein sequence, read N- to C-terminus: Glucans biosynthesis protein G 1 (544 aa).

A signal peptide spans 1-33 (MVSLLRCQSFKPSSIICSLALSAAFALSGTAFA). The tract at residues 36 to 58 (SKPAENKPATPVVSPPKATAPSA) is disordered.

The protein belongs to the OpgD/OpgG family.

The protein localises to the periplasm. It functions in the pathway glycan metabolism; osmoregulated periplasmic glucan (OPG) biosynthesis. Functionally, involved in the biosynthesis of osmoregulated periplasmic glucans (OPGs). This Shewanella oneidensis (strain ATCC 700550 / JCM 31522 / CIP 106686 / LMG 19005 / NCIMB 14063 / MR-1) protein is Glucans biosynthesis protein G 1 (opgG1).